Reading from the N-terminus, the 301-residue chain is UDP-N-acetylenolpyruvoylglucosamine reductase (301 aa).

Residues 27-194 (RVGGPADVVF…LDAIFEGTPD (168 aa)) enclose the FAD-binding PCMH-type domain. Arg-172 is an active-site residue. The Proton donor role is filled by Ser-223. Glu-293 is a catalytic residue.

The protein belongs to the MurB family. FAD serves as cofactor.

Its subcellular location is the cytoplasm. The enzyme catalyses UDP-N-acetyl-alpha-D-muramate + NADP(+) = UDP-N-acetyl-3-O-(1-carboxyvinyl)-alpha-D-glucosamine + NADPH + H(+). It functions in the pathway cell wall biogenesis; peptidoglycan biosynthesis. Its function is as follows. Cell wall formation. In Caulobacter vibrioides (strain NA1000 / CB15N) (Caulobacter crescentus), this protein is UDP-N-acetylenolpyruvoylglucosamine reductase.